Reading from the N-terminus, the 571-residue chain is ATRPKGAVQPKYEDAMQYEFKVNGEPVVLHLEKNKGLFSKDYSEIHYSPDGREITTYPPVEDHCYYHGRIENDADSTASISACNGLKGYFKLQRETYFIEPLKLPDSEAHAVFKYENVEKEDEAPKMCGVTQNWKSYEPIKKASQLAFTAEQQRYDPYKYIEFFVVVDQGTVTKNNGDLDKIKARMYELANIVNEIFRYLYMHVALVGLEIWSNGDKITVKPDVDYTLNSFAEWRKTDLLTRKKHDNAQLLTAIDFNGPTIGYAYIGSMCHPKRSVGIVQDYSPINLVVAVIMAHEMGHNLGIHHDTGSCSCGDYPCIMGPTISNEPSKFFSNCSYIQCWDFIMNHNPECIINEPLGTDIISPPVCGNELLEVGEECDCGTPENCQNECCDAATCKLKSGSQCGHGDCCEQCKFSKSGTECRASMSECDPAEHCTGQSSECPADVFHKNGQPCLDNYGYCYNGNCPIMYHQCYALFGADVYEAEDSCFKDNQKGNYYGYCRKENGKKIPCAPEDVKCGRLYCKDNSPGQNNPCKMFYSNDDEHKGMVLPGTKCADGKVCSNGHCVDVATAY.

Positions 1-150 (ATRPKGAVQP…KKASQLAFTA (150 aa)) are excised as a propeptide. Glu151 is modified (pyrrolidone carboxylic acid (Glu)). Positions 159–355 (KYIEFFVVVD…HNPECIINEP (197 aa)) constitute a Peptidase M12B domain. Ca(2+)-binding residues include Glu162 and Asp246. 3 cysteine pairs are disulfide-bonded: Cys270/Cys350, Cys310/Cys334, and Cys312/Cys317. His295 contributes to the Zn(2+) binding site. The active site involves Glu296. Zn(2+) contacts are provided by His299 and His305. Residue Asn333 is glycosylated (N-linked (GlcNAc...) asparagine). Positions 350, 353, 365, 368, 370, 372, 375, and 378 each coordinate Ca(2+). The Disintegrin domain occupies 363 to 449 (PPVCGNELLE…ECPADVFHKN (87 aa)). Intrachain disulfides connect Cys366–Cys385, Cys366–Cys395, Cys377–Cys390, Cys377–Cys395, Cys379–Cys385, Cys389–Cys412, Cys403–Cys409, Cys408–Cys434, Cys421–Cys441, Cys428–Cys453, Cys428–Cys460, Cys453–Cys465, Cys460–Cys465, Cys472–Cys487, Cys472–Cys522, Cys487–Cys533, Cys500–Cys510, Cys510–Cys517, Cys517–Cys559, Cys522–Cys533, Cys553–Cys564, and Cys559–Cys564. The short motif at 427-429 (ECD) is the D/ECD-tripeptide element. Residues Asp429, Pro430, Glu432, Asp444, and Val445 each contribute to the Ca(2+) site.

Belongs to the venom metalloproteinase (M12B) family. P-III subfamily. P-IIIb sub-subfamily. Monomer (Jararhagin and Jararhagin-C) and dimer (Jaracetin). The cofactor is Zn(2+). The N-terminus of Jararhagin is blocked. As to expression, expressed by the venom gland.

The protein resides in the secreted. The catalysed reaction is Cleavage of 10-His-|-Leu-11, 14-Ala-|-Leu-15, 16-Tyr-|-Leu-17 and 24-Phe-|-Phe-25 bonds in insulin B chain.. Inhibited by EDTA, 1,10 phenanthroline and batimastat (a peptidomimetic MMP inhibitor). Its function is as follows. Snake venom zinc metalloproteinase-disintegrin-like jararhagin: causes hemorrhage. This is the result of the degradation of sub-endothelial matrix proteins leading to the disruption of the blood vessel endothelium, with accompanying disturbances in platelet function. It is able to degrade von Willebrand factor (vWF) and it hydrolyzes the alpha-chain of fibrinogen (FGA) while leaving the beta and gamma chains unaffected. It inhibits collagen-induced platelet aggregation through the binding to alpha-2/beta-1 integrin (ITGA2/ITGB1) (collagen receptor), and it cleaves the beta-1 subunit of the same integrin, inhibiting platelet interaction and ultimately causing impairment of signal transduction. It has inability to be affected by the plasma inhibitor alpha(2)-macroglobulin. In fibroblasts, it functions as a collagen-mimetic substrate and, in endothelial cells, it causes apoptosis and indirectly inhibits cell proliferation by release of angiostatin-like compounds. It induces a strong pro-inflammatory response characterized by intense leukocyte accumulation and release of cytokines at the site of the injection. Although hemorrhage and edema are a response to the direct effect of this toxin, jararhagin-induced inflammation and necrosis are dependent on macrophages and key pro-inflammatory cytokines or their receptors. It also possesses anti-tumorgenic properties. Functionally, the monomeric form inhibits collagen- and ADP-induced platelet aggregation, but has no effect on glycoprotein Ib-IX-dependent (GP1BA/GP5/GP9) platelet agglutination. Locally activates the early events of an acute inflammatory response as leukocyte rolling and pro-inflammatory cytokine release. In terms of biological role, the dimeric form jaracetin may be a dimeric form of jararhagin-C. It binds to von Willebrand factor (VWF) and induces its interaction with GPIbalpha (GP1BA) (via the vWF A1 domain), resulting in platelet aggregation. Also binds the alpha-2 subunit of the alpha-2/beta-1 (ITGA2/ITGB1) integrin. It potently induces platelet aggregation in citrated platelet-rich plasma. This Bothrops jararaca (Jararaca) protein is Zinc metalloproteinase-disintegrin-like jararhagin.